The chain runs to 394 residues: Elongation factor Tu 1 (394 aa).

The 195-residue stretch at 10-204 (KPHVNVGTIG…ALDSYIPEPE (195 aa)) folds into the tr-type G domain. Positions 19 to 26 (GHVDHGKT) are G1. 19–26 (GHVDHGKT) serves as a coordination point for GTP. A Mg(2+)-binding site is contributed by threonine 26. A G2 region spans residues 60 to 64 (GITIN). The interval 81–84 (DCPG) is G3. Residues 81-85 (DCPGH) and 136-139 (NKCD) each bind GTP. Positions 136–139 (NKCD) are G4. The G5 stretch occupies residues 174-176 (SAL).

It belongs to the TRAFAC class translation factor GTPase superfamily. Classic translation factor GTPase family. EF-Tu/EF-1A subfamily. In terms of assembly, monomer.

The protein localises to the cytoplasm. The enzyme catalyses GTP + H2O = GDP + phosphate + H(+). In terms of biological role, GTP hydrolase that promotes the GTP-dependent binding of aminoacyl-tRNA to the A-site of ribosomes during protein biosynthesis. In Shewanella oneidensis (strain ATCC 700550 / JCM 31522 / CIP 106686 / LMG 19005 / NCIMB 14063 / MR-1), this protein is Elongation factor Tu 1.